Consider the following 204-residue polypeptide: Probable nicotinate-nucleotide adenylyltransferase (204 aa).

It belongs to the NadD family.

The catalysed reaction is nicotinate beta-D-ribonucleotide + ATP + H(+) = deamido-NAD(+) + diphosphate. Its pathway is cofactor biosynthesis; NAD(+) biosynthesis; deamido-NAD(+) from nicotinate D-ribonucleotide: step 1/1. Catalyzes the reversible adenylation of nicotinate mononucleotide (NaMN) to nicotinic acid adenine dinucleotide (NaAD). The polypeptide is Probable nicotinate-nucleotide adenylyltransferase (Mycolicibacterium gilvum (strain PYR-GCK) (Mycobacterium gilvum (strain PYR-GCK))).